Here is a 190-residue protein sequence, read N- to C-terminus: Small ribosomal subunit protein eS7 (190 aa).

It belongs to the eukaryotic ribosomal protein eS7 family.

This Manduca sexta (Tobacco hawkmoth) protein is Small ribosomal subunit protein eS7 (RpS7).